Reading from the N-terminus, the 135-residue chain is Basic phospholipase A2 KBf-VA (135 aa).

7 disulfides stabilise this stretch: Cys28/Cys87, Cys42/Cys134, Cys44/Cys60, Cys59/Cys115, Cys66/Cys108, Cys76/Cys101, and Cys94/Cys106. Residues Tyr43, Gly45, and Gly47 each coordinate Ca(2+). The active site involves His63. Residue Asp64 participates in Ca(2+) binding. The active site involves Asp109.

This sequence belongs to the phospholipase A2 family. Group I subfamily. D49 sub-subfamily. Ca(2+) is required as a cofactor. As to expression, expressed by the venom gland.

The protein resides in the secreted. It catalyses the reaction a 1,2-diacyl-sn-glycero-3-phosphocholine + H2O = a 1-acyl-sn-glycero-3-phosphocholine + a fatty acid + H(+). Its function is as follows. Snake venom phospholipase A2 (PLA2) that inhibits neuromuscular transmission by blocking acetylcholine release from the nerve termini. PLA2 catalyzes the calcium-dependent hydrolysis of the 2-acyl groups in 3-sn-phosphoglycerides. The polypeptide is Basic phospholipase A2 KBf-VA (Bungarus fasciatus (Banded krait)).